The primary structure comprises 418 residues: Tyrosine--tRNA ligase (418 aa).

Position 34 (Tyr-34) interacts with L-tyrosine. The short motif at 39–48 (PTADSLHLGH) is the 'HIGH' region element. Positions 169 and 173 each coordinate L-tyrosine. Residues 229–233 (KFGKS) carry the 'KMSKS' region motif. Lys-232 contributes to the ATP binding site. Residues 352 to 418 (LNLVDMLVTA…GKKKYAVLTY (67 aa)) form the S4 RNA-binding domain.

It belongs to the class-I aminoacyl-tRNA synthetase family. TyrS type 1 subfamily. In terms of assembly, homodimer.

The protein localises to the cytoplasm. The catalysed reaction is tRNA(Tyr) + L-tyrosine + ATP = L-tyrosyl-tRNA(Tyr) + AMP + diphosphate + H(+). Its function is as follows. Catalyzes the attachment of tyrosine to tRNA(Tyr) in a two-step reaction: tyrosine is first activated by ATP to form Tyr-AMP and then transferred to the acceptor end of tRNA(Tyr). The chain is Tyrosine--tRNA ligase from Streptococcus pyogenes serotype M3 (strain SSI-1).